We begin with the raw amino-acid sequence, 187 residues long: ATP synthase subunit b 2 (187 aa).

The chain crosses the membrane as a helical span at residues 32-52 (TTFAAQILWLAIAFGLLYYLM).

This sequence belongs to the ATPase B chain family. In terms of assembly, F-type ATPases have 2 components, F(1) - the catalytic core - and F(0) - the membrane proton channel. F(1) has five subunits: alpha(3), beta(3), gamma(1), delta(1), epsilon(1). F(0) has three main subunits: a(1), b(2) and c(10-14). The alpha and beta chains form an alternating ring which encloses part of the gamma chain. F(1) is attached to F(0) by a central stalk formed by the gamma and epsilon chains, while a peripheral stalk is formed by the delta and b chains.

It localises to the cell inner membrane. Its function is as follows. F(1)F(0) ATP synthase produces ATP from ADP in the presence of a proton or sodium gradient. F-type ATPases consist of two structural domains, F(1) containing the extramembraneous catalytic core and F(0) containing the membrane proton channel, linked together by a central stalk and a peripheral stalk. During catalysis, ATP synthesis in the catalytic domain of F(1) is coupled via a rotary mechanism of the central stalk subunits to proton translocation. In terms of biological role, component of the F(0) channel, it forms part of the peripheral stalk, linking F(1) to F(0). The b'-subunit is a diverged and duplicated form of b found in plants and photosynthetic bacteria. The polypeptide is ATP synthase subunit b 2 (atpF2) (Methylobacterium sp. (strain 4-46)).